A 547-amino-acid chain; its full sequence is MTGTKNKTRAQAKTEKKPVTQAKAGAEREATGVVRPVAKTRAKAKAKTGSKTDAVAEMKAVSKNKVVAEVKEGALSEPKTLGRAMGDFSSKAGNESTSSTCENEAGIDAWFWAGEEATINSWFWNGEEAGNSSSTKNDKPEIGAQVCAEELEPAAGADCKPRSGAEEEEEENVIGNWFWEGDDTSFDPNPKPVSRIVKPQPLYEINEKNRPKDWSEVTIWPNAPAVTPAVLGFRSQAPSEASPPSYIVLASAEENACSLPGATACRPSRNTRSCSQPIPECRFDSDPCIQTIDEIRRQIRIREVNGIKPFACPCKMECYMDSEEFEKLVNLLKSTTDPLIHKIARIAMGVHNVHPFAQEFINEVGVVTLIESLLSFPSPEMRKKTVITLNPPSGDERQRKIELHVKHMCKETVSFPLNSPGQQSGLKILGQLTTDFVHHYIVANYFSELFHLLSSGNCKTRNLVLKLLLNMSENPTAARDMINMKALAALKLIFNQKEAKANLVSGVAIFINIKEHIRKGSIVVVDHLSYNTLMAIFREVKGIIETM.

Basic residues-rich tracts occupy residues 1 to 10 (MTGTKNKTRA) and 38 to 48 (AKTRAKAKAKT). Residues 1-53 (MTGTKNKTRAQAKTEKKPVTQAKAGAEREATGVVRPVAKTRAKAKAKTGSKTD) form a disordered region.

It belongs to the GPRASP family. Homodimer.

It is found in the cytoplasm. The protein resides in the nucleus. In terms of biological role, survival and differentiation promoting protein that plays a role in the regulation of neurosynaptogenesis. Induces phosphatase PP2A activity which results in APP dephosphorylation and inhibits BACE1-mediated processing of APP. This chain is G protein-coupled receptor associated sorting protein 3 (GPRASP3), found in Macaca fascicularis (Crab-eating macaque).